The following is a 545-amino-acid chain: MAAFTANAVDMRPPVITIHPRSKDIFSQFSLDDKLQKQYAQGIEALKEEARSMLMAAKSAKVMILIDTLERLGLGYHFEKEIEEKLEAIYKKEDGDDYDLFTTALRFRLLRQHQRRVPCSVFDKFMNKEGKFEEEPLISDVEGLLSLYDAAYLQIHGEHILQEALIFTTHHLTRIEPQLDDHSPLKLKLNRALEFPFYREIPIIYAHFYISVYERDDSRDEVLLKMAKLSYNFLQNLYKKELSQLSRWWNKLELIPNLPYIRDSVAGAYLWAVALYFEPQYSDVRMAIAKLIQIAAAVDDTYDNYATIREAQLLTEALERLNVHEIDTLPDYMKIVYRFVMSWSEDFERDATIKEQMLATPYFKAEMKKLGRAYNQELKWVMERQLPSFEEYMKNSEITSGVYIMFTVISPYLNSATQKNIDWLLSQPRLASSTAIVMRCCNDLGSNQRESKGGEVMTSLDCYMKQHGASKQETISKFKLIIEDEWKNLNEEWAATTCLPKVMVEIFRNYARIAGFCYKNNGDAYTSPKIVQQCFDALFVNPLRI.

Mg(2+) contacts are provided by aspartate 299, aspartate 303, asparagine 442, and glutamate 450. The DDXXD motif motif lies at 299–303 (DDTYD).

It belongs to the terpene synthase family. Requires Mg(2+) as cofactor.

It localises to the cytoplasm. Its subcellular location is the cytosol. The catalysed reaction is (2E,6E)-farnesyl diphosphate = gamma-curcumene + diphosphate. It participates in secondary metabolite biosynthesis; terpenoid biosynthesis. Functionally, sesquiterpene synthase involved in gamma-curcumene biosynthesis. In Pogostemon cablin (Patchouli), this protein is Gamma-curcumene synthase.